The primary structure comprises 573 residues: Cytosolic 5'-nucleotidase 1B (573 aa).

Residues 1–11 (MSQTSLKHKKK) show a composition bias toward basic residues. 2 disordered regions span residues 1–200 (MSQT…PPTE) and 218–238 (EPEYISDGPQQRQRQQTEEDE). The span at 12 to 35 (NEPGMRYSKESLDAEKRKDSDKTG) shows a compositional bias: basic and acidic residues. Over residues 60-73 (NQWSRTSRSPSTGA) the composition is skewed to polar residues. Positions 93–105 (SSTTSRTSSASPS) are enriched in low complexity. Residues 115-136 (TSEKSSIQQTPQNRPITQLESQ) are compositionally biased toward polar residues. 2 stretches are compositionally biased toward basic and acidic residues: residues 161 to 174 (WAHRENREPRDLQL) and 182 to 194 (DSREGMPKTREYP). Asp-428 acts as the Nucleophile in catalysis.

The protein belongs to the 5'-nucleotidase type 3 family. Mg(2+) is required as a cofactor. Expressed at highest levels in testis. Also expressed in brain, skeletal muscle, kidney and heart.

The protein localises to the cytoplasm. It catalyses the reaction a ribonucleoside 5'-phosphate + H2O = a ribonucleoside + phosphate. It carries out the reaction AMP + H2O = adenosine + phosphate. Its activity is regulated as follows. Activated by ADP. Catalyzes the hydrolysis of nucleotide monophosphates, releasing inorganic phosphate and the corresponding nucleoside, AMP is the major substrate. The sequence is that of Cytosolic 5'-nucleotidase 1B (Nt5c1b) from Mus musculus (Mouse).